The chain runs to 338 residues: DNA-directed RNA polymerase subunit alpha (338 aa).

An alpha N-terminal domain (alpha-NTD) region spans residues 1–234 (MIHKNWAELI…DQLSIFVNFE (234 aa)). Residues 250-338 (FNPLLLKKVD…DLAKRFEDQF (89 aa)) are alpha C-terminal domain (alpha-CTD).

This sequence belongs to the RNA polymerase alpha chain family. Homodimer. The RNAP catalytic core consists of 2 alpha, 1 beta, 1 beta' and 1 omega subunit. When a sigma factor is associated with the core the holoenzyme is formed, which can initiate transcription.

It carries out the reaction RNA(n) + a ribonucleoside 5'-triphosphate = RNA(n+1) + diphosphate. Functionally, DNA-dependent RNA polymerase catalyzes the transcription of DNA into RNA using the four ribonucleoside triphosphates as substrates. This is DNA-directed RNA polymerase subunit alpha from Cereibacter sphaeroides (strain ATCC 17025 / ATH 2.4.3) (Rhodobacter sphaeroides).